Reading from the N-terminus, the 392-residue chain is L-lactate dehydrogenase (392 aa).

The region spanning 1–380 (MIISASTDYR…GSDSLVTGSA (380 aa)) is the FMN hydroxy acid dehydrogenase domain. Tyrosine 24 serves as a coordination point for substrate. Residues serine 106 and glutamine 127 each contribute to the FMN site. Tyrosine 129 is a substrate binding site. Residue threonine 155 participates in FMN binding. Arginine 164 contributes to the substrate binding site. Lysine 251 contacts FMN. Histidine 275 (proton acceptor) is an active-site residue. Residue arginine 278 participates in substrate binding. FMN is bound at residue 306–330 (DSGVRNGLDVVRMIAMGADTILLGR).

It belongs to the FMN-dependent alpha-hydroxy acid dehydrogenase family. It depends on FMN as a cofactor.

The protein localises to the cell inner membrane. The enzyme catalyses (S)-lactate + A = pyruvate + AH2. In terms of biological role, catalyzes the conversion of L-lactate to pyruvate. Is coupled to the respiratory chain. In Chromohalobacter salexigens (strain ATCC BAA-138 / DSM 3043 / CIP 106854 / NCIMB 13768 / 1H11), this protein is L-lactate dehydrogenase.